Reading from the N-terminus, the 261-residue chain is Cytochrome c oxidase subunit 3 (261 aa).

Residues 1–15 (MTHQTHAYHMVNPSP) are Mitochondrial matrix-facing. Residues 16 to 34 (WPLTGALSALLMTSGLIMW) form a helical membrane-spanning segment. Residues 35–40 (FHYNSM) are Mitochondrial intermembrane-facing. Residues 41-66 (SLLTLGFTTNLLTMYQWWRDVIREGT) form a helical membrane-spanning segment. Residues 67–72 (FQGHHT) lie on the Mitochondrial matrix side of the membrane. The chain crosses the membrane as a helical span at residues 73-105 (PIVQKGLRYGMVLFIVSEVFFFAGFFWAFYHSS). Residues 106–128 (LAPTPELGGCWPPTGIIPLNPLE) lie on the Mitochondrial intermembrane side of the membrane. A helical transmembrane segment spans residues 129–152 (VPLLNTSVLLASGVSITWAHHSLM). Residues 153 to 155 (EGN) lie on the Mitochondrial matrix side of the membrane. The chain crosses the membrane as a helical span at residues 156–183 (RKHMLQALFITISLGVYFTLLQASEYYE). Topologically, residues 184 to 190 (TSFTISD) are mitochondrial intermembrane. The helical transmembrane segment at 191 to 223 (GVYGSTFFMATGFHGLHVIIGSTFLIVCFLRQL) threads the bilayer. The Mitochondrial matrix segment spans residues 224-232 (YYHFTSNHH). The chain crosses the membrane as a helical span at residues 233 to 256 (FGFEAAAWYWHFVDVVWLFLYVSI). The Mitochondrial intermembrane portion of the chain corresponds to 257 to 261 (YWWGS).

The protein belongs to the cytochrome c oxidase subunit 3 family. Component of the cytochrome c oxidase (complex IV, CIV), a multisubunit enzyme composed of 14 subunits. The complex is composed of a catalytic core of 3 subunits MT-CO1, MT-CO2 and MT-CO3, encoded in the mitochondrial DNA, and 11 supernumerary subunits COX4I, COX5A, COX5B, COX6A, COX6B, COX6C, COX7A, COX7B, COX7C, COX8 and NDUFA4, which are encoded in the nuclear genome. The complex exists as a monomer or a dimer and forms supercomplexes (SCs) in the inner mitochondrial membrane with NADH-ubiquinone oxidoreductase (complex I, CI) and ubiquinol-cytochrome c oxidoreductase (cytochrome b-c1 complex, complex III, CIII), resulting in different assemblies (supercomplex SCI(1)III(2)IV(1) and megacomplex MCI(2)III(2)IV(2)).

The protein resides in the mitochondrion inner membrane. It carries out the reaction 4 Fe(II)-[cytochrome c] + O2 + 8 H(+)(in) = 4 Fe(III)-[cytochrome c] + 2 H2O + 4 H(+)(out). Its function is as follows. Component of the cytochrome c oxidase, the last enzyme in the mitochondrial electron transport chain which drives oxidative phosphorylation. The respiratory chain contains 3 multisubunit complexes succinate dehydrogenase (complex II, CII), ubiquinol-cytochrome c oxidoreductase (cytochrome b-c1 complex, complex III, CIII) and cytochrome c oxidase (complex IV, CIV), that cooperate to transfer electrons derived from NADH and succinate to molecular oxygen, creating an electrochemical gradient over the inner membrane that drives transmembrane transport and the ATP synthase. Cytochrome c oxidase is the component of the respiratory chain that catalyzes the reduction of oxygen to water. Electrons originating from reduced cytochrome c in the intermembrane space (IMS) are transferred via the dinuclear copper A center (CU(A)) of subunit 2 and heme A of subunit 1 to the active site in subunit 1, a binuclear center (BNC) formed by heme A3 and copper B (CU(B)). The BNC reduces molecular oxygen to 2 water molecules using 4 electrons from cytochrome c in the IMS and 4 protons from the mitochondrial matrix. The chain is Cytochrome c oxidase subunit 3 (MT-CO3) from Canis lupus (Gray wolf).